The following is a 621-amino-acid chain: Glutathione-regulated potassium-efflux system protein KefC (621 aa).

The next 12 helical transmembrane spans lie at 4–24 (HTLIQALIYLGAAALIVPIAV), 26–46 (LGLGSVLGYLIAGCIIGPWGL), 54–74 (AILHFAEIGVVLMLFVIGLEL), 90–110 (GALQMVACGVLIGLFCMLLGL), 114–134 (VAELIGMTLALSSTAIAMQAM), 149–169 (FAVLLFQDIAAIPLVAMIPLL), 178–198 (LVAFALSALKVAAALALVVAL), 218–238 (VFSAVALFLVFGFGLLLEEVG), 270–290 (GLLLGLFFIGVGMSIDFGTLV), 294–314 (LRIVILLVGFLAIKMLMLWLI), 326–346 (RWFAVLLGQGSEFAFVVFGAA), and 359–379 (ALTLAVALSMAATPVLLVLLT). Residues 399 to 518 (QPRVIVAGFG…AGVEAPERET (120 aa)) form the RCK N-terminal domain. The interval 598–621 (GWQGTEEGRHTGDIADEPENKPSA) is disordered.

It belongs to the monovalent cation:proton antiporter 2 (CPA2) transporter (TC 2.A.37) family. KefC subfamily. As to quaternary structure, homodimer. Interacts with the regulatory subunit KefF.

Its subcellular location is the cell inner membrane. Functionally, pore-forming subunit of a potassium efflux system that confers protection against electrophiles. Catalyzes K(+)/H(+) antiport. This Klebsiella pneumoniae (strain 342) protein is Glutathione-regulated potassium-efflux system protein KefC.